Here is a 401-residue protein sequence, read N- to C-terminus: 2,3,4,5-tetrahydropyridine-2,6-dicarboxylate N-succinyltransferase (401 aa).

Glutamate 269 (acyl-anhydride intermediate) is an active-site residue. Succinyl-CoA-binding positions include arginine 271, glycine 286, serine 289, alanine 312, 327-328 (DA), glycine 335, and lysine 364.

It belongs to the type 2 tetrahydrodipicolinate N-succinyltransferase family. In terms of assembly, homotrimer.

The protein localises to the cytoplasm. The catalysed reaction is (S)-2,3,4,5-tetrahydrodipicolinate + succinyl-CoA + H2O = (S)-2-succinylamino-6-oxoheptanedioate + CoA. It participates in amino-acid biosynthesis; L-lysine biosynthesis via DAP pathway; LL-2,6-diaminopimelate from (S)-tetrahydrodipicolinate (succinylase route): step 1/3. Functionally, catalyzes the conversion of the cyclic tetrahydrodipicolinate (THDP) into the acyclic N-succinyl-L-2-amino-6-oxopimelate using succinyl-CoA. The protein is 2,3,4,5-tetrahydropyridine-2,6-dicarboxylate N-succinyltransferase of Helicobacter pylori (strain ATCC 700392 / 26695) (Campylobacter pylori).